We begin with the raw amino-acid sequence, 97 residues long: Co-chaperonin GroES (97 aa).

Belongs to the GroES chaperonin family. In terms of assembly, heptamer of 7 subunits arranged in a ring. Interacts with the chaperonin GroEL.

The protein resides in the cytoplasm. In terms of biological role, together with the chaperonin GroEL, plays an essential role in assisting protein folding. The GroEL-GroES system forms a nano-cage that allows encapsulation of the non-native substrate proteins and provides a physical environment optimized to promote and accelerate protein folding. GroES binds to the apical surface of the GroEL ring, thereby capping the opening of the GroEL channel. In Pseudomonas aeruginosa (strain LESB58), this protein is Co-chaperonin GroES.